A 119-amino-acid polypeptide reads, in one-letter code: Virulence protein VsdF (119 aa).

Its function is as follows. Expressed but non-essential protein, involved in the virulence of Salmonellas. The protein is Virulence protein VsdF (vsdF) of Salmonella dublin.